A 374-amino-acid polypeptide reads, in one-letter code: UDP-N-acetylglucosamine--N-acetylmuramyl-(pentapeptide) pyrophosphoryl-undecaprenol N-acetylglucosamine transferase (374 aa).

UDP-N-acetyl-alpha-D-glucosamine-binding positions include 35–37 (TGG), N144, R185, S211, and Q305.

This sequence belongs to the glycosyltransferase 28 family. MurG subfamily.

It localises to the cell inner membrane. The catalysed reaction is di-trans,octa-cis-undecaprenyl diphospho-N-acetyl-alpha-D-muramoyl-L-alanyl-D-glutamyl-meso-2,6-diaminopimeloyl-D-alanyl-D-alanine + UDP-N-acetyl-alpha-D-glucosamine = di-trans,octa-cis-undecaprenyl diphospho-[N-acetyl-alpha-D-glucosaminyl-(1-&gt;4)]-N-acetyl-alpha-D-muramoyl-L-alanyl-D-glutamyl-meso-2,6-diaminopimeloyl-D-alanyl-D-alanine + UDP + H(+). It functions in the pathway cell wall biogenesis; peptidoglycan biosynthesis. Its function is as follows. Cell wall formation. Catalyzes the transfer of a GlcNAc subunit on undecaprenyl-pyrophosphoryl-MurNAc-pentapeptide (lipid intermediate I) to form undecaprenyl-pyrophosphoryl-MurNAc-(pentapeptide)GlcNAc (lipid intermediate II). This is UDP-N-acetylglucosamine--N-acetylmuramyl-(pentapeptide) pyrophosphoryl-undecaprenol N-acetylglucosamine transferase from Trichodesmium erythraeum (strain IMS101).